Here is a 539-residue protein sequence, read N- to C-terminus: O-phosphoserine--tRNA(Cys) ligase (539 aa).

Substrate-binding positions include 188-190 (HMT), 233-235 (SAS), 275-276 (YY), and Asn319.

This sequence belongs to the class-II aminoacyl-tRNA synthetase family. O-phosphoseryl-tRNA(Cys) synthetase subfamily. In terms of assembly, homotetramer. Interacts with SepCysS.

It catalyses the reaction tRNA(Cys) + O-phospho-L-serine + ATP = O-phospho-L-seryl-tRNA(Cys) + AMP + diphosphate. In terms of biological role, catalyzes the attachment of O-phosphoserine (Sep) to tRNA(Cys). The sequence is that of O-phosphoserine--tRNA(Cys) ligase (sepS) from Methanocaldococcus jannaschii (strain ATCC 43067 / DSM 2661 / JAL-1 / JCM 10045 / NBRC 100440) (Methanococcus jannaschii).